The chain runs to 329 residues: Phosphate acyltransferase (329 aa).

Belongs to the PlsX family. As to quaternary structure, homodimer. Probably interacts with PlsY.

Its subcellular location is the cytoplasm. The catalysed reaction is a fatty acyl-[ACP] + phosphate = an acyl phosphate + holo-[ACP]. The protein operates within lipid metabolism; phospholipid metabolism. Catalyzes the reversible formation of acyl-phosphate (acyl-PO(4)) from acyl-[acyl-carrier-protein] (acyl-ACP). This enzyme utilizes acyl-ACP as fatty acyl donor, but not acyl-CoA. The polypeptide is Phosphate acyltransferase (Exiguobacterium sp. (strain ATCC BAA-1283 / AT1b)).